A 304-amino-acid chain; its full sequence is Solute carrier family 25 member 34 (304 aa).

3 Solcar repeats span residues 4–97 (VPPA…ACQA), 101–194 (QQPG…AKAW), and 204–295 (DSWL…LRKL). Transmembrane regions (helical) follow at residues 7-27 (AVDLVLGASACCLACVFTNPL), 45-65 (TYPRLYRGFVASVVAVVRADG), 98-120 (GLSQQPGGTVVAGAVAGALGAFV), 170-191 (VGGAVPRVMVGSAAQLATFASA), 206-226 (WLVALAGGMISSIAVVAVMTP), and 278-301 (LGPHTILSMLFWDELRKLAGWGQH).

The protein belongs to the mitochondrial carrier (TC 2.A.29) family.

Its subcellular location is the mitochondrion inner membrane. The enzyme catalyses a dicarboxylate(in) + sulfate(out) = a dicarboxylate(out) + sulfate(in). Functionally, putative antiporter that exchanges dicarboxylates and sulfur oxoanions across the inner membrane of mitochondria. The sequence is that of Solute carrier family 25 member 34 (SLC25A34) from Bos taurus (Bovine).